The sequence spans 185 residues: CASP-like protein SELMODRAFT_413556 (185 aa).

The Cytoplasmic portion of the chain corresponds to 1–89 (MATLPLSLIF…AVTVLFYLAK (89 aa)). Residues 90–110 (LVFGILGLALSIIWLLHIIVF) traverse the membrane as a helical segment. Topologically, residues 111–131 (MLVNPPAFPFLNQVFIQLDSA) are extracellular. Residues 132–152 (WGLLGTTAFAIFCYYLIMSVI) traverse the membrane as a helical segment. Residues 153–163 (SGEMHSIHPMK) are Cytoplasmic-facing. The helical transmembrane segment at 164 to 184 (YQGTLMNSFLFNVAIILLCST) threads the bilayer. Residue arginine 185 is a topological domain, extracellular.

This sequence belongs to the Casparian strip membrane proteins (CASP) family. Homodimer and heterodimers.

Its subcellular location is the cell membrane. This chain is CASP-like protein SELMODRAFT_413556, found in Selaginella moellendorffii (Spikemoss).